A 3110-amino-acid polypeptide reads, in one-letter code: MKAFESLKSFQQQQQQQQPPPQPPPPPPPPPQPPQPPPQGQPPPPPPLPGPAEEPLHRPKKELSATKKDRVNHCLTICENIVAQSLRNSPEFQKLLGIAMELFLLCSDDASRRRMVADECLNKVIKALMDSNLPRLQLELYKEIKKNGAPRSLRAALWRFAELAHLVRPQKCRPYLVNLLPCLTRTSKRPEESVQETLAAAVPKIMASFGNFANDNEIKVLLKAFIANLKSSSPTVRRTAAGSAVSICQHSRRTQYFYNWLLNVLLGLLVPMEEDHPTLLILGVLLTLRCLVPLLQQQVKDTSLKGSFGVTRKEMEVSPSAEQLVQVYELTLHHTQHQDHNVVTGALELLQQLFRTPPPELLQALTTPGGLGQLTLVREEAGGRGRSGSIVELLAGGGSSCSPVLSRKQKGKVLLGEEEALEDDSESRSDVSSSAFAASVKSEIGGELAASSSGVSTPGSVGHDIITEQPRSQHTLQADSVDLSGCDLTSAATDGDEEDILSHSSSQFSAVPSDPAMDLNDGTQASSPISDSSQTTTEGPDSAVTPSDSSEIVLDGADSQYLGVQIGQPQEEDREAAGVLSGEVSDVFRNSSLALQQAHLLERMGHSRQPSDSSVDKFVSKDEVAEAGDPESKPCRIKGDIGQPNDDDSAPLVHCVRLLSASFLLTGEKKALVPDRDVRVSVKALALSCIGAAVALHPESFFSKLYKVPLSTMESTEEQYVSDILNYIDHGDPQVRGATAILCGTLVYSILSRSRLRVGDWLGTIRALTGNTFSLVDCIPLLQKTLKDESSVTCKLACTAVRHCVLSLCSSSYSDLGLQLLIDMLPLKNSSYWLVRTELLETLAEIDFRLVSFLEAKAESLHRGPHHYTGFLKLQERVLNNVVIYLLGDEDPRVRHVAATTLTRLVPKLFYKCDQGQADPVEAVARDQSSVYLKLLMHETQPPSHFSVSTITRIYRGYSLLPSVTDVTMENNLSRVVAAVSHELITSTTRALTFGCCEALCVLSAAFPVCTWSLGWHCGVPPLSASDESRKSCTVGMASMILTLLSSAWFPLDLSAIQDALILAGNLLAASAPKSLRSSWASEEEGSSAATRQEEIWPALGDRTLVPMVEQLFSHLLKVINICAHVLDDETPGPAIKAALPSLTNPPSLSPIRRKGKEKEPGEQTSTPMSPKKGGEASTASRQSDTSGPVTASKSSSLGSFYHLPSYLRLHDVLKATHANYKVTLDLQNSTEKFGGFLRSALDVLSQILELATLQDIGKCVEEVLGYLKSCFSREPMMATVCVQQLLKTLFGTNLASQFDGLSSNPSKSQCRAQRLGSSSVRPGLYHYCFMAPYTHFTQALADASLRNMVQADQEHDASGWFDVLQKVSAQLKTNLTSVTKNRADKNAIHNHIRLFEPLVIKALKQYTTTTSVQLQKQVLDLLAQLVQLRVNYCLLDSDQVFIGFVLKQFEYIEVGQFRESEAIIPNIFFFLVLLSYERYHSKQIIGIPKIIQLCDGIMASGRKAVTHAIPALQPIVHDLFVLRGTNKADAGKELETQKEVVVSMLLRLIQYHQVLEMFILVLQQCHKENEDKWKRLSRQVADIILPMLAKQQMHIDSHEALGVLNTLFEILAPSSLRPVDMLLRSMFITPSTMASVSTVQLWISGILAILRVLISQSTEDIVLSRIQELSFSPYLISCPVINRLRDGDSNPTLGERSRGKQVKNLPEDTFSRFLLQLVGILLEDIVTKQLKVDMSEQQHTFYCQELGTLLMCLIHIFKSGMFRRITAAATRLFTSDGCEGSFYTLDSLNARVRAMVPTHPALVLLWCQILLLINHTDHRWWAEVQQTPKRHSLSCTKSLNPQISAEEDSGSAAQLGMCNREIVRRGALILFCDYVCQNLHDSEHLTWLIVNHIQDLISLSHEPPVQDFISAIHRNSAASGLFIQAIQSRCENLSTPTTLKKTLQCLEGIHLSQSGAVLTLYVDRLLGTPFRALARMVDTLACRRVEMLLAANLQSSMAQLPEEELNRIQEHLQNTGLAQRHQRLYSLLDRFRLSTVQDSLSPLPPVTSHPLDGDGHTSLETVNPDKDWYLQLVRSQCWTRSDSALLEGAELVNRIPAEDMSDFMMSSEFNLSLFAPCLSLGMSEIAGSQKSPLFEAARRVTLDRVTNVVQQLPAVHQVFQPFLPTEPTAYWSKLNDLFGDTTSYQSLTTLARALAQYLVVLSKVPAPLHLPPEKEGHTVKFVVMTLEALSWHLIHEQIPLSLDLQAGLDCCCLALQVPGLWGVLSSPEYVTHTCSLIHCVRFILEAIAVQPGDQLLGPESRSHTPRAVRKEEVDSDIQNLSHITSACEMVADMVESLQSVLALGHKRNSTLPSFLTAVLKNIVVSLARLPLVNSYTRVPPLVWKLGWSPKPGGDFGTVFPEIPVEFLQEKEVLKEFIYRINTLGWTSRTQFEETWATLLGVLVTQPLVMEQEESPPEEDTERTQIHVLAVQAITSLVLSAMAVPVAGNPAVSCLEQQPRNKPLKALDTRFGRKLSMIRGIVEQEIQEMVSQRENTATHHSHQAWDPVPSLLPATTGALISHDKLLLQINSEREPGNMSYKLGQVSIHSVWLGNNITPLREEEWDEEEEEEADAPAPTSPPVSPVNSRKHRAGVDIHSCSQFLLELYSRWILPSSAARRTPVILISEVVRSLLVVSDLFTDVPQFEMMYLTLTELRRVHPSEDEILIQYLVPATCKAAAVLGMDKTVAEPVSRLLESTLRSTHLPSQIGALHGILYVLECDLLDDTVKQLIPVVSDYLLSNLKGIAHCVNIHSQQHVLVMCATAFYLMENYPLDVGPEFSASVIQMCGVMLSGSEESTPSVIYHCALRGLERLLLSEQLSRLDTESLVKLSVDRVNVQSPHRAMAALGLMLTCMYTGKEKASPGRASDPSPATPDSESVIVAMERVSVLFDRIRKGFPCEARVVARILPQFLDDFFPPQDVMNKVIGEFLSNQQPYPQFMATVVYKVFQTLHSAGQSSMVRDWVMLSLSNFTQRTPVAMAMWSLSCFLVSASTSPWVSAILPHVISRMGKLEQVDVNLFCLVATDFYRHQIEEEFDRRAFQSVFEVVAAPGSPYHRLLACLQNVHKVTAC.

The segment at 1–58 (MKAFESLKSFQQQQQQQQPPPQPPPPPPPPPQPPQPPPQGQPPPPPPLPGPAEEPLHR) is disordered. At K2 the chain carries N6-acetyllysine. A compositionally biased stretch (pro residues) spans 18 to 52 (QPPPQPPPPPPPPPQPPQPPPQGQPPPPPPLPGPA). N6-acetyllysine occurs at positions 146 and 204. HEAT repeat units follow at residues 174–211 (PYLV…SFGN) and 216–253 (NEIK…HSRR). K313 is subject to N6-acetyllysine. A phosphoserine mark is found at S387, S389, and S402. An N6-acetyllysine modification is found at K412. Residues 462-473 (GHDIITEQPRSQ) are interaction with ZDHHC17. The segment at 487–549 (DLTSAATDGD…PDSAVTPSDS (63 aa)) is disordered. A compositionally biased stretch (polar residues) spans 521–549 (DGTQASSPISDSSQTTTEGPDSAVTPSDS). G522 carries the N-myristoyl glycine lipid modification. 2 positions are modified to phosphoserine: S611 and S614. HEAT repeat units follow at residues 773–810 (FSLV…SLCS) and 873–911 (KLQE…KLFY). The disordered stretch occupies residues 1137 to 1195 (KAALPSLTNPPSLSPIRRKGKEKEPGEQTSTPMSPKKGGEASTASRQSDTSGPVTASKS). Residues 1140–1151 (LPSLTNPPSLSP) show a composition bias toward low complexity. Phosphoserine; by CDK5 occurs at positions 1150 and 1170. Residues 1178-1195 (STASRQSDTSGPVTASKS) are compositionally biased toward polar residues. The stretch at 1395–1432 (LFEPLVIKALKQYTTTTSVQLQKQVLDLLAQLVQLRVN) is one HEAT 5 repeat. S1845 carries the post-translational modification Phosphoserine. The Nuclear export signal motif lies at 2363–2372 (IVVSLARLPL). The tract at residues 2601–2628 (EEEWDEEEEEEADAPAPTSPPVSPVNSR) is disordered. Residues 2602-2613 (EEWDEEEEEEAD) are compositionally biased toward acidic residues.

It belongs to the huntingtin family. Interacts with PFN1. Interacts through its N-terminus with PRPF40A. Interacts with PQBP1. Interacts with SETD2. Interacts with SH3GLB1. Interacts with SYVN. Interacts with TPR; the interaction is inhibited by forms of Huntingtin with expanded polyglutamine stretch. Interacts with ZDHHC13 (via ANK repeats). Interacts with ZDHHC17 (via ANK repeats). Interacts with F8A1/F8A2/F8A3. Found in a complex with F8A1/F8A2/F8A3, HTT and RAB5A; mediates the recruitment of HTT by RAB5A. In terms of processing, phosphorylation at Ser-1150 and Ser-1170 by CDK5 in response to DNA damage in nuclei of neurons protects neurons against polyglutamine expansion as well as DNA damage mediated toxicity. Post-translationally, cleaved by caspases downstream of the polyglutamine stretch. Myristoylated at Gly-522, following proteolytic cleavage at Asp-521. As to expression, expressed to a high degree in all the regions of the brain of adults and in meiotic cells of the testis. In addition, very low levels are detected in various non-neuronal tissues (heart, muscle, liver, lung and kidney).

The protein resides in the cytoplasm. It localises to the nucleus. It is found in the cytoplasmic vesicle. The protein localises to the autophagosome. In terms of biological role, may play a role in microtubule-mediated transport or vesicle function. Promotes the formation of autophagic vesicles. The sequence is that of Huntingtin (Htt) from Rattus norvegicus (Rat).